A 32-amino-acid chain; its full sequence is Sodium channel neurotoxin BmK NT2 (32 aa).

One can recognise an LCN-type CS-alpha/beta domain in the interval 2 to 32 (RDAYIAKPENCVYHCAGNEGCNNLCTCNGAT).

As to expression, expressed by the venom gland.

The protein localises to the secreted. In terms of biological role, alpha toxins bind voltage-independently at site-3 of sodium channels (Nav) and inhibit the inactivation of the activated channels, thereby blocking neuronal transmission. This toxin dose-dependently delays inactivation of voltage-gated sodium channels (Nav) (EC(50)=0.91 uM), and shifts the steady-state activation and inactivation to hyperpolarized direction. In addition, it dose-dependently alters calcium dynamics and increases phosphorylation of MAP kinases 1/3 (MAPK1/MAPK3) and cAMP-response element binding (CREB) proteins in neocortical neurons. This effect is eliminated by tetrodotoxin, a Nav blocker. In Olivierus martensii (Manchurian scorpion), this protein is Sodium channel neurotoxin BmK NT2.